The chain runs to 159 residues: UPF0260 protein Avi_1324 (159 aa).

The protein belongs to the UPF0260 family.

The sequence is that of UPF0260 protein Avi_1324 from Allorhizobium ampelinum (strain ATCC BAA-846 / DSM 112012 / S4) (Agrobacterium vitis (strain S4)).